A 58-amino-acid chain; its full sequence is Large ribosomal subunit protein bL32 (58 aa).

Residues 1–15 show a composition bias toward basic residues; the sequence is MAVPKKKTSKAKRNQ. Residues 1–23 form a disordered region; the sequence is MAVPKKKTSKAKRNQRSATWKGK.

The protein belongs to the bacterial ribosomal protein bL32 family.

The chain is Large ribosomal subunit protein bL32 from Parasynechococcus marenigrum (strain WH8102).